Consider the following 439-residue polypeptide: Trigger factor (439 aa).

A PPIase FKBP-type domain is found at 163 to 248; sequence GDRVTIDYRG…LNKLEAPKLP (86 aa).

Belongs to the FKBP-type PPIase family. Tig subfamily.

The protein localises to the cytoplasm. It catalyses the reaction [protein]-peptidylproline (omega=180) = [protein]-peptidylproline (omega=0). Its function is as follows. Involved in protein export. Acts as a chaperone by maintaining the newly synthesized protein in an open conformation. Functions as a peptidyl-prolyl cis-trans isomerase. The polypeptide is Trigger factor (Nitrosomonas europaea (strain ATCC 19718 / CIP 103999 / KCTC 2705 / NBRC 14298)).